The following is a 64-amino-acid chain: Defensin beta 4A (64 aa).

The N-terminal stretch at 1 to 23 (MRVLYLLFSFLFIFLMPLPGVFG) is a signal peptide. Cystine bridges form between Cys-31–Cys-60, Cys-38–Cys-53, and Cys-43–Cys-61. Residues 33–48 (KNGAICHPVFCPRRYK) form a phosphatidylinositol 4,5-bisphosphate (PIP2) binding region.

The protein belongs to the beta-defensin family. LAP/TAP subfamily. As to quaternary structure, monomer. Homodimer.

Its subcellular location is the secreted. Functionally, exhibits antimicrobial activity against Gram-negative bacteria and Gram-positive bacteria, with highest activity against Gram-negative bacteria. Antimicrobial activity against P.aruginosa seems to be salt-sensitive and is reduced with high salt concentrations greater than 25 mM. Also exhibits antimicrobial activity against the yeast C.albicans. Permeabilizes C.albicans cell membranes via targeting plasma membrane lipid phosphatidylinositol 4,5-bisphosphate (PIP2), thereby leading to cell fragmentation and cell death. Acts as a ligand for C-C chemokine receptor CCR6. Binds to CCR6 and induces chemotactic activity of CCR6-expressing cells, such as immature dendritic cells and memory T cells. The polypeptide is Defensin beta 4A (DEFB4A) (Macaca mulatta (Rhesus macaque)).